A 247-amino-acid polypeptide reads, in one-letter code: Synaptogyrin homolog 1 (247 aa).

The MARVEL domain maps to 21–175 (FFKKPTVLFR…AAFFAWRRYE (155 aa)). Transmembrane regions (helical) follow at residues 25-45 (PTVL…YSVS), 69-89 (CSFA…LIVL), 105-125 (AVLA…IGFF), and 151-171 (FGIL…FFAW). The segment at 206–247 (DSTGIGHVGAPPPQSSYQSGAAPQTMQQPPSNPYTQSEGYGY) is disordered. Residues 220 to 247 (SSYQSGAAPQTMQQPPSNPYTQSEGYGY) are compositionally biased toward polar residues.

Belongs to the synaptogyrin family. Expressed in a wide variety of neurons and is expressed weakly in the non-neuronal distal tip cells. A punctate pattern was observed in the ventral and dorsal nerve cords and the nerve ring. Weak expression is seen in neuronal cell bodies and commissures.

The protein resides in the membrane. This Caenorhabditis elegans protein is Synaptogyrin homolog 1 (sng-1).